Consider the following 245-residue polypeptide: Phycocyanobilin:ferredoxin oxidoreductase (245 aa).

It belongs to the HY2 family.

The catalysed reaction is (2R,3Z)-phycocyanobilin + 4 oxidized [2Fe-2S]-[ferredoxin] = biliverdin IXalpha + 4 reduced [2Fe-2S]-[ferredoxin] + 4 H(+). Catalyzes the four-electron reduction of biliverdin IX-alpha (2-electron reduction at both the A and D rings); the reaction proceeds via an isolatable 2-electron intermediate, 181,182-dihydrobiliverdin. The chain is Phycocyanobilin:ferredoxin oxidoreductase from Gloeothece citriformis (strain PCC 7424) (Cyanothece sp. (strain PCC 7424)).